A 365-amino-acid chain; its full sequence is Patr class I histocompatibility antigen, A-126 alpha chain (365 aa).

A signal peptide spans 1–24 (MAVMAPRTLVLLLSGALALTQTWA). The alpha-1 stretch occupies residues 25-114 (GSHSMRYFST…LRGYYNQSED (90 aa)). At 25 to 308 (GSHSMRYFST…EPSSQPTIPI (284 aa)) the chain is on the extracellular side. The N-linked (GlcNAc...) asparagine glycan is linked to Asn110. The interval 115-206 (GSHTIQLMFG…ENGKETLQRT (92 aa)) is alpha-2. Disulfide bonds link Cys125–Cys188 and Cys227–Cys283. The alpha-3 stretch occupies residues 207-298 (DPPKTHMTHH…GLPKPLTLRW (92 aa)). The region spanning 209–295 (PKTHMTHHPI…QHEGLPKPLT (87 aa)) is the Ig-like C1-type domain. The interval 299–308 (EPSSQPTIPI) is connecting peptide. A helical membrane pass occupies residues 309–332 (VGIIAGLVLLGAVITGAVVAAVMW). The Cytoplasmic segment spans residues 333–365 (RRKSSDRKGGSYSQAASSDSAQGSDVSLTACKV). The segment at 338-365 (DRKGGSYSQAASSDSAQGSDVSLTACKV) is disordered. The span at 342-359 (GSYSQAASSDSAQGSDVS) shows a compositional bias: low complexity. Ser343 carries the post-translational modification Phosphoserine. Tyr344 carries the post-translational modification Phosphotyrosine. Phosphoserine is present on residues Ser345, Ser349, Ser352, Ser356, and Ser359.

Belongs to the MHC class I family. Heterodimer of an alpha chain and a beta chain (beta-2-microglobulin).

Its subcellular location is the membrane. Its function is as follows. Involved in the presentation of foreign antigens to the immune system. The sequence is that of Patr class I histocompatibility antigen, A-126 alpha chain (Patr-A) from Pan troglodytes (Chimpanzee).